A 486-amino-acid polypeptide reads, in one-letter code: Siroheme synthase (486 aa).

Positions 1–204 (MNYLPIFVDL…HQIEQAEALV (204 aa)) are precorrin-2 dehydrogenase /sirohydrochlorin ferrochelatase. NAD(+) contacts are provided by residues 22–23 (HI) and 43–44 (EK). Serine 128 carries the post-translational modification Phosphoserine. The uroporphyrinogen-III C-methyltransferase stretch occupies residues 216–486 (GEVSLVGAGP…NKETHWKQAA (271 aa)). Proline 225 lines the S-adenosyl-L-methionine pocket. The active-site Proton acceptor is the aspartate 248. The active-site Proton donor is lysine 270. S-adenosyl-L-methionine-binding positions include 301–303 (GGD), valine 306, 331–332 (TA), methionine 383, and glycine 412.

The protein in the N-terminal section; belongs to the precorrin-2 dehydrogenase / sirohydrochlorin ferrochelatase family. In the C-terminal section; belongs to the precorrin methyltransferase family.

The catalysed reaction is uroporphyrinogen III + 2 S-adenosyl-L-methionine = precorrin-2 + 2 S-adenosyl-L-homocysteine + H(+). It carries out the reaction precorrin-2 + NAD(+) = sirohydrochlorin + NADH + 2 H(+). It catalyses the reaction siroheme + 2 H(+) = sirohydrochlorin + Fe(2+). The protein operates within cofactor biosynthesis; adenosylcobalamin biosynthesis; precorrin-2 from uroporphyrinogen III: step 1/1. It functions in the pathway cofactor biosynthesis; adenosylcobalamin biosynthesis; sirohydrochlorin from precorrin-2: step 1/1. Its pathway is porphyrin-containing compound metabolism; siroheme biosynthesis; precorrin-2 from uroporphyrinogen III: step 1/1. It participates in porphyrin-containing compound metabolism; siroheme biosynthesis; siroheme from sirohydrochlorin: step 1/1. The protein operates within porphyrin-containing compound metabolism; siroheme biosynthesis; sirohydrochlorin from precorrin-2: step 1/1. Its function is as follows. Multifunctional enzyme that catalyzes the SAM-dependent methylations of uroporphyrinogen III at position C-2 and C-7 to form precorrin-2 via precorrin-1. Then it catalyzes the NAD-dependent ring dehydrogenation of precorrin-2 to yield sirohydrochlorin. Finally, it catalyzes the ferrochelation of sirohydrochlorin to yield siroheme. This is Siroheme synthase from Actinobacillus pleuropneumoniae serotype 3 (strain JL03).